A 539-amino-acid chain; its full sequence is Hydroxylamine reductase (539 aa).

4 residues coordinate [4Fe-4S] cluster: Cys3, Cys6, Cys13, and Cys19. His240, Glu264, Cys308, Cys395, Cys423, Cys448, Glu482, and Lys484 together coordinate hybrid [4Fe-2O-2S] cluster. Cys395 carries the cysteine persulfide modification.

The protein belongs to the HCP family. [4Fe-4S] cluster is required as a cofactor. The cofactor is hybrid [4Fe-2O-2S] cluster.

Its subcellular location is the cytoplasm. It carries out the reaction A + NH4(+) + H2O = hydroxylamine + AH2 + H(+). In terms of biological role, catalyzes the reduction of hydroxylamine to form NH(3) and H(2)O. The sequence is that of Hydroxylamine reductase from Thermodesulfovibrio yellowstonii (strain ATCC 51303 / DSM 11347 / YP87).